Consider the following 346-residue polypeptide: Protein RecA (346 aa).

64-71 (GPESSGKT) serves as a coordination point for ATP.

This sequence belongs to the RecA family.

The protein resides in the cytoplasm. Functionally, can catalyze the hydrolysis of ATP in the presence of single-stranded DNA, the ATP-dependent uptake of single-stranded DNA by duplex DNA, and the ATP-dependent hybridization of homologous single-stranded DNAs. It interacts with LexA causing its activation and leading to its autocatalytic cleavage. The protein is Protein RecA of Bacillus pumilus (strain SAFR-032).